The chain runs to 1351 residues: MSKKDSKNSPKKSKDTNSDESSSSNAETSSDKSITYLKLRDDSKTEIKYIYHMSDIHIRKLQRHDEYKEVFDRTYKILKSEITSNDSIIVLTGDIMHMKTEMSPEIIDITSNFFKTLNEIAPVILIPGNHDCNLSNKNRLDALSPIIENTYKFPDLFYLKKSGLYQFYNIVFGVTSVFEDDLVTADKITKEHWNKIKQPNKFKIALYHGPVHNAKTDVGYRMNNEQLLAEDFKGYHYVMLGDIHRFQYMNENKTIAYSGSLIQQSYGESLHGHGILKWSLVEKSSELIEVRNDYGYCTVKIIDGQMIETKIPKKPRVRFILENTNQIQYQEVINNLEKQYLIQEIVKESNLKTKYNNSSPSKKDKPTAYATQETMVNSYMEKRGLDEKTTKGIIELHKKIYQKILANNKEKVVDVMHNSTKTQKWRLLELRFSNALSYGKDNVIDFRNYDPNKIIGIFAPNHYGKSAVLDIILFCLFDKCSRGDRRDILNKNEKNMSCSILLSIGSQQYYIERIGVRNKNGLTVKIDVNFYSITTNEKGKETMTKLNGLDKNETNRKIAELIGDYNDYLTTCFSLQTKNSNFIDMTQLQKKEYLNDILKLNVFEECHNYAKDKLKDLTGQLKVLEQKIGQKSLDDFKSSVRKITEEMSVINSEIKWIGNNLLPQVDIVINKNPVVPRIYYNELLDYDLTDVKSIIRTQTNILKQLSDKQNNNEIGTISVEITSKKQQLNEISTKFDEEKIKLETQLGELRTNKENLLKKLIKIPKINSDEIETHKKTVQECEDRINIIDKVFEEHENDELTDKMSRIDELKALISRLRKSLAVTNNNDYSHLDKLYEELINVDTKYRQCISNVLNPKKILNQQEKNHLSEIVKIKRYFTDNLIDNNGLLGDYDKGKSNLNDELIEKIMSKNNQIIDQENEWFEQADEYLKQDNSGIIDVDDIIKQRSKIQEQIRKILLNILNKKENQIIESKINKAQTELDALAEFTGTKKEIDNLVQEKKLLKDKIVFLKEKISQNELAVQNQKSNDEIKKQINEIESKIDQITCIIKDNTSEINTLKQYISEKESIIKKHQKQIDQTNKLNHHYKLLDKYYLEYTNWNHKNSTREKWLKTRTEMNDKLNDLNKNLDKKQVELDMFKKEVEQYIESRKEFDDKSTEVNLYQHYVQIMNCNGLPYEMLKTYLPLIESDVNEILHSMVNFNIEFMFYDDSKLEEQKTKQLKSNMGSVDINICYHNMKPYNVQLASGFERFIIGLAIRMTLCQISLTSKPNFLIIDEGWSCLDSDNLSNVGTIMNYIKTQYEHVIIISHLDELKSQADYIISIDKVKGYSRIIENKKTIKKIINKKPNKIIEL.

The span at 1 to 17 shows a compositional bias: basic and acidic residues; sequence MSKKDSKNSPKKSKDTN. The disordered stretch occupies residues 1-31; it reads MSKKDSKNSPKKSKDTNSDESSSSNAETSSD. Low complexity predominate over residues 19–31; that stretch reads DESSSSNAETSSD.

This is an uncharacterized protein from Acanthamoeba polyphaga mimivirus (APMV).